Here is a 467-residue protein sequence, read N- to C-terminus: Uronate isomerase (467 aa).

Belongs to the metallo-dependent hydrolases superfamily. Uronate isomerase family.

It carries out the reaction D-glucuronate = D-fructuronate. The catalysed reaction is aldehydo-D-galacturonate = keto-D-tagaturonate. It participates in carbohydrate metabolism; pentose and glucuronate interconversion. The sequence is that of Uronate isomerase from Mannheimia succiniciproducens (strain KCTC 0769BP / MBEL55E).